We begin with the raw amino-acid sequence, 187 residues long: Protein TIFY 11b (187 aa).

Residues 68 to 103 (ATAPAAPLTIFYGGRMVVFEDFPADKAAEVMRMASS) form the Tify domain. The Jas motif lies at 121 to 145 (PIMRKASLQRFFAKRKDRLAATTPY). Residues 123–130 (MRKASLQR) carry the Nuclear localization signal motif. The segment at 139 to 168 (LAATTPYARPSPAETKASEPEEKKTPTSWL) is disordered. Positions 154–163 (KASEPEEKKT) are enriched in basic and acidic residues.

This sequence belongs to the TIFY/JAZ family. In terms of assembly, interacts with COI1B in a coronatine-dependent manner. Coronatine is an analog of jasmonoyl isoleucine (JA-Ile). Ubiquitinated. Targeted for degradation by the SCF(COI1) E3 ubiquitin ligase-proteasome pathway during jasmonate signaling.

It localises to the nucleus. Its function is as follows. Repressor of jasmonate responses. The sequence is that of Protein TIFY 11b from Oryza sativa subsp. japonica (Rice).